We begin with the raw amino-acid sequence, 312 residues long: Ribonuclease Z (312 aa).

Residues His62, His64, Asp66, His67, His144, Asp215, and His273 each coordinate Zn(2+). Residue Asp66 is the Proton acceptor of the active site.

Belongs to the RNase Z family. As to quaternary structure, homodimer. Requires Zn(2+) as cofactor.

It carries out the reaction Endonucleolytic cleavage of RNA, removing extra 3' nucleotides from tRNA precursor, generating 3' termini of tRNAs. A 3'-hydroxy group is left at the tRNA terminus and a 5'-phosphoryl group is left at the trailer molecule.. In terms of biological role, zinc phosphodiesterase, which displays some tRNA 3'-processing endonuclease activity. Probably involved in tRNA maturation, by removing a 3'-trailer from precursor tRNA. In Prochlorococcus marinus (strain MIT 9312), this protein is Ribonuclease Z.